We begin with the raw amino-acid sequence, 125 residues long: MAGGVGGRVVVGRHVYGNLYGCDARVLGDEAALITIVKEAVRVANAMLLSIGSYRFGPNGGLTVFAVVAESHISIHTWPEHGFATVDVYTCGDHTDPKAAFDFIVEKLSPKKIEVFYGDRSMYSE.

Catalysis depends on Ser71, which acts as the Schiff-base intermediate with substrate; via pyruvic acid. A Pyruvic acid (Ser); by autocatalysis modification is found at Ser71. The active-site Proton acceptor; for processing activity is His76. The Proton donor; for catalytic activity role is filled by Cys91.

This sequence belongs to the prokaryotic AdoMetDC family. Type 1 subfamily. As to quaternary structure, heterotetramer of two alpha and two beta chains arranged as a dimer of alpha/beta heterodimers. The cofactor is pyruvate. In terms of processing, is synthesized initially as an inactive proenzyme. Formation of the active enzyme involves a self-maturation process in which the active site pyruvoyl group is generated from an internal serine residue via an autocatalytic post-translational modification. Two non-identical subunits are generated from the proenzyme in this reaction, and the pyruvate is formed at the N-terminus of the alpha chain, which is derived from the carboxyl end of the proenzyme. The post-translation cleavage follows an unusual pathway, termed non-hydrolytic serinolysis, in which the side chain hydroxyl group of the serine supplies its oxygen atom to form the C-terminus of the beta chain, while the remainder of the serine residue undergoes an oxidative deamination to produce ammonia and the pyruvoyl group blocking the N-terminus of the alpha chain.

It carries out the reaction S-adenosyl-L-methionine + H(+) = S-adenosyl 3-(methylsulfanyl)propylamine + CO2. It participates in amine and polyamine biosynthesis; S-adenosylmethioninamine biosynthesis; S-adenosylmethioninamine from S-adenosyl-L-methionine: step 1/1. Functionally, catalyzes the decarboxylation of S-adenosylmethionine to S-adenosylmethioninamine (dcAdoMet), the propylamine donor required for the synthesis of the polyamines spermine and spermidine from the diamine putrescine. The sequence is that of S-adenosylmethionine decarboxylase proenzyme from Pyrobaculum arsenaticum (strain DSM 13514 / JCM 11321 / PZ6).